Consider the following 151-residue polypeptide: Large ribosomal subunit protein bL9 (151 aa).

It belongs to the bacterial ribosomal protein bL9 family.

Binds to the 23S rRNA. The chain is Large ribosomal subunit protein bL9 from Desulfotalea psychrophila (strain LSv54 / DSM 12343).